A 138-amino-acid chain; its full sequence is ATP synthase epsilon chain (138 aa).

The protein belongs to the ATPase epsilon chain family. In terms of assembly, F-type ATPases have 2 components, CF(1) - the catalytic core - and CF(0) - the membrane proton channel. CF(1) has five subunits: alpha(3), beta(3), gamma(1), delta(1), epsilon(1). CF(0) has three main subunits: a, b and c.

It is found in the cell inner membrane. Produces ATP from ADP in the presence of a proton gradient across the membrane. In Geobacter sulfurreducens (strain ATCC 51573 / DSM 12127 / PCA), this protein is ATP synthase epsilon chain.